A 443-amino-acid polypeptide reads, in one-letter code: Sulfoquinovose isomerase (443 aa).

This sequence belongs to the SqvD family.

It carries out the reaction 6-sulfo-beta-D-quinovose = 6-deoxy-6-sulfo-D-fructose. Functionally, part of the sulfo-EMP2 pathway, a D-sulfoquinovose degradation pathway that produces sulfolactate (SL). Catalyzes the isomerization of sulfoquinovose (SQ) to 6-deoxy-6-sulfo-D-fructose (SF). This is Sulfoquinovose isomerase from Alkalicoccus urumqiensis (Bacillus urumqiensis).